The sequence spans 152 residues: uncharacterized protein (152 aa).

Belongs to the transposase 8 family.

This is an uncharacterized protein from Sinorhizobium fredii (strain NBRC 101917 / NGR234).